We begin with the raw amino-acid sequence, 176 residues long: MAEAPSRMQQNYDWQCEDAINTHIQLCLYASYEYMSMAVYFDRDDVAQENFKRFFLTKSHNCQTSAEMFMHLQNKRGGCSSLQGIARPERDSWHGGFQAMECAFHMEMLINQSLLNMHEVAKEKGDPHLCHFLEQNCLDQQVDILKEMSGYLTNLRQMGAVEHNLAEYLFDKLSLS.

Residues 10–159 enclose the Ferritin-like diiron domain; it reads QNYDWQCEDA…GYLTNLRQMG (150 aa). Cysteine 27, glutamate 107, and glutamine 141 together coordinate Fe cation.

It belongs to the ferritin family. In terms of tissue distribution, expressed in the testes and spermatogonia.

The protein is Ferritin heavy polypeptide-like 17E of Mus musculus (Mouse).